We begin with the raw amino-acid sequence, 240 residues long: Aspartate/glutamate leucyltransferase (240 aa).

It belongs to the R-transferase family. Bpt subfamily.

Its subcellular location is the cytoplasm. It catalyses the reaction N-terminal L-glutamyl-[protein] + L-leucyl-tRNA(Leu) = N-terminal L-leucyl-L-glutamyl-[protein] + tRNA(Leu) + H(+). It carries out the reaction N-terminal L-aspartyl-[protein] + L-leucyl-tRNA(Leu) = N-terminal L-leucyl-L-aspartyl-[protein] + tRNA(Leu) + H(+). In terms of biological role, functions in the N-end rule pathway of protein degradation where it conjugates Leu from its aminoacyl-tRNA to the N-termini of proteins containing an N-terminal aspartate or glutamate. In Gluconobacter oxydans (strain 621H) (Gluconobacter suboxydans), this protein is Aspartate/glutamate leucyltransferase.